The chain runs to 1289 residues: DNA-directed RNA polymerase subunit beta (1289 aa).

The protein belongs to the RNA polymerase beta chain family. In terms of assembly, the RNAP catalytic core consists of 2 alpha, 1 beta, 1 beta' and 1 omega subunit. When a sigma factor is associated with the core the holoenzyme is formed, which can initiate transcription.

The enzyme catalyses RNA(n) + a ribonucleoside 5'-triphosphate = RNA(n+1) + diphosphate. Its function is as follows. DNA-dependent RNA polymerase catalyzes the transcription of DNA into RNA using the four ribonucleoside triphosphates as substrates. This chain is DNA-directed RNA polymerase subunit beta, found in Methylacidiphilum infernorum (isolate V4) (Methylokorus infernorum (strain V4)).